The chain runs to 344 residues: Uroporphyrinogen decarboxylase (344 aa).

Substrate is bound by residues 23–27, aspartate 73, tyrosine 149, threonine 204, and histidine 321; that span reads RQAGR.

It belongs to the uroporphyrinogen decarboxylase family. Homodimer.

The protein resides in the cytoplasm. The enzyme catalyses uroporphyrinogen III + 4 H(+) = coproporphyrinogen III + 4 CO2. Its pathway is porphyrin-containing compound metabolism; protoporphyrin-IX biosynthesis; coproporphyrinogen-III from 5-aminolevulinate: step 4/4. Its function is as follows. Catalyzes the decarboxylation of four acetate groups of uroporphyrinogen-III to yield coproporphyrinogen-III. In Francisella tularensis subsp. novicida (strain U112), this protein is Uroporphyrinogen decarboxylase.